Reading from the N-terminus, the 1992-residue chain is E3 ubiquitin-protein ligase TRIP12 (1992 aa).

Over residues Met-1–Gly-10 the composition is skewed to polar residues. Disordered regions lie at residues Met-1–Glu-398, Gln-797–Asp-817, and Ser-938–Asp-1080. Ser-2 carries the post-translational modification N-acetylserine. Residue Ser-12 is modified to Phosphoserine. Residues Arg-18–Asp-27 show a composition bias toward polar residues. Residues Asp-48–Arg-70 are compositionally biased toward basic and acidic residues. Phosphoserine occurs at positions 77, 85, and 100. Residues Pro-78 to Ser-88 are compositionally biased toward polar residues. A compositionally biased stretch (polar residues) spans Glu-119–Lys-132. 2 stretches are compositionally biased toward low complexity: residues Ser-154–Thr-166 and Pro-175–Val-216. At Lys-181 the chain carries N6-acetyllysine. Residues Pro-280–Pro-290 are compositionally biased toward polar residues. Residues Ser-310 and Ser-312 each carry the phosphoserine modification. Over residues Gln-326 to Arg-338 the composition is skewed to polar residues. Basic and acidic residues predominate over residues Gly-346 to Asp-358. Composition is skewed to polar residues over residues Glu-360–Ala-371 and Leu-803–Ser-812. Residues Met-749–Lys-836 enclose the WWE domain. Ser-942 carries the phosphoserine modification. The segment covering Thr-948–Ala-973 has biased composition (low complexity). 2 positions are modified to phosphoserine: Ser-991 and Ser-997. Residues Lys-1001 to Lys-1014 show a composition bias toward basic residues. Ser-1016 is subject to Phosphoserine. Positions Pro-1017 to Asn-1026 are enriched in basic and acidic residues. Residues Lys-1029–Ser-1040 show a composition bias toward low complexity. The residue at position 1030 (Ser-1030) is a Phosphoserine. The span at Phe-1041–Ile-1062 shows a compositional bias: polar residues. A phosphoserine mark is found at Ser-1317, Ser-1322, Ser-1329, and Ser-1376. Residue Thr-1377 is modified to Phosphothreonine. Disordered regions lie at residues Ser-1407–Lys-1433 and Thr-1568–Asp-1587. Lys-1425 carries the N6-acetyllysine modification. Ser-1427 bears the Phosphoserine mark. Residues Glu-1496–Pro-1570 are K-box. The HECT domain maps to Pro-1885 to Ser-1992. Cys-1959 serves as the catalytic Glycyl thioester intermediate.

It belongs to the UPL family. K-HECT subfamily. In terms of assembly, interacts with MYC; leading to disrupt interaction with isoform p19ARF/ARF of CDKN2A. Interacts with TRADD; leading to disrupt interaction with isoform p19ARF/ARF of CDKN2A. Interacts with SMARCC1; leading to disrupt interaction with SMARCE1.

It localises to the nucleus. Its subcellular location is the nucleoplasm. It catalyses the reaction S-ubiquitinyl-[E2 ubiquitin-conjugating enzyme]-L-cysteine + [acceptor protein]-L-lysine = [E2 ubiquitin-conjugating enzyme]-L-cysteine + N(6)-ubiquitinyl-[acceptor protein]-L-lysine.. It functions in the pathway protein modification; protein ubiquitination. E3 ubiquitin-protein ligase involved in ubiquitin fusion degradation (UFD) pathway and regulation of DNA repair. Part of the ubiquitin fusion degradation (UFD) pathway, a process that mediates ubiquitination of protein at their N-terminus, regardless of the presence of lysine residues in target proteins. Acts as a key regulator of DNA damage response by acting as a suppressor of RNF168, an E3 ubiquitin-protein ligase that promotes accumulation of 'Lys-63'-linked histone H2A and H2AX at DNA damage sites, thereby acting as a guard against excessive spreading of ubiquitinated chromatin at damaged chromosomes. In normal cells, mediates ubiquitination and degradation of isoform p19ARF/ARF of CDKN2A, a lysine-less tumor suppressor required for p53/TP53 activation under oncogenic stress. In cancer cells, however, isoform p19ARF/ARF and TRIP12 are located in different cell compartments, preventing isoform p19ARF/ARF ubiquitination and degradation. Does not mediate ubiquitination of isoform p16-INK4a of CDKN2A. Also catalyzes ubiquitination of NAE1 and SMARCE1, leading to their degradation. Ubiquitination and degradation of target proteins is regulated by interaction with proteins such as MYC, TRADD or SMARCC1, which disrupt the interaction between TRIP12 and target proteins. Mediates ubiquitination of ASXL1: following binding to N(6)-methyladenosine methylated DNA, ASXL1 is ubiquitinated by TRIP12, leading to its degradation and subsequent inactivation of the PR-DUB complex. The sequence is that of E3 ubiquitin-protein ligase TRIP12 (TRIP12) from Homo sapiens (Human).